A 482-amino-acid chain; its full sequence is MSISSILLSLFFILNILLAIIVIFKERRDASASWAWLLVLFFIPVLGFILYLLFGHNLRRKHLFQWEDRKKIGIERLLKHQLEDLETKQFQFNNRATFDNKDLIYMLIMNNHAVFTEDNSVDVITDGRDKFQRLLSDISKAKDHIHLQYYIYKGDELGKKLRDALIQKAKEGVQVRVLYDELGSRTLRKKFFKELREAGGHVEVFFPSKLRPINLRLNYRNHRKLVIIDGMTGYVGGFNVGDEYLGLNPKFGYWRDTHIRLQGTAVHAIQTRFILDWNQASHHHTLTYIPNHFPDYGPKGNVGMQIVTSGPDSEWEQIKNGYIKMISNAKRSILIQTPYFIPDASLLDALRIACLSGIDVNIMIPNKPDHAFVYWATLSYIGDLLKAGATVYIYDNGFIHAKTIVVDDEIASVGTANIDVRSFRLNFEVNAFIYDITIAKKLVSTFKEDLLVSRKFTYEEYLQRPLWIRIKESVSRLLSPIL.

The next 2 helical transmembrane spans lie at 3 to 23 and 34 to 54; these read ISSI…IIVI and WAWL…YLLF. PLD phosphodiesterase domains follow at residues 217-244 and 395-422; these read LNYR…GDEY and DNGF…DVRS. Active-site residues include His-222, Lys-224, Asp-229, His-400, Lys-402, and Asp-407.

It belongs to the phospholipase D family. Cardiolipin synthase subfamily.

The protein resides in the cell membrane. It catalyses the reaction 2 a 1,2-diacyl-sn-glycero-3-phospho-(1'-sn-glycerol) = a cardiolipin + glycerol. Catalyzes the reversible phosphatidyl group transfer from one phosphatidylglycerol molecule to another to form cardiolipin (CL) (diphosphatidylglycerol) and glycerol. The polypeptide is Major cardiolipin synthase ClsA (clsA) (Bacillus subtilis (strain 168)).